A 351-amino-acid polypeptide reads, in one-letter code: Keratocan (351 aa).

Positions 1 to 20 are cleaved as a signal peptide; the sequence is MATPNCLILWVLLIADTVWT. The region spanning 34-72 is the LRRNT domain; it reads DWDVHDDFYCPRECFCPPSFPTALYCENRGLTEIPPIPS. 2 disulfides stabilise this stretch: cysteine 43–cysteine 49 and cysteine 47–cysteine 59. LRR repeat units follow at residues 73–94, 97–118, 123–143, 144–165, 168–181, 194–214, 215–236, 239–259, 264–283, and 284–305; these read RIWY…PFEN, QLRW…KGAL, KLLF…PLPR, SLEQ…TFSN, NLTL…KLLD, NLMQ…RLPA, NTMQ…YFNV, KVAF…PSRG, SILD…RINA, and NLQH…VICP. Asparagine 94 carries N-linked (GlcNAc...) (keratan sulfate) asparagine glycosylation. A glycan (N-linked (GlcNAc...) (keratan sulfate) asparagine) is linked at asparagine 168. Asparagine 223 carries an N-linked (GlcNAc...) asparagine glycan. A glycan (N-linked (GlcNAc...) asparagine) is linked at asparagine 299. A disulfide bond links cysteine 304 and cysteine 342.

It belongs to the small leucine-rich proteoglycan (SLRP) family. SLRP class II subfamily. Post-translationally, binds keratan sulfate chains. Selectively expressed in cornea of adult where it is detected in keratocytes but not in scleral cells. In embryo, first detected in periocular mesenchymal cells migrating toward developing cornea on 13.5 dpc; expression gradually restricted to corneal stromal cells on 14.5 to 18.5 dpc. Detected in scleral cells of 15.5 dpc but not in 18.5 dpc embryos.

It is found in the secreted. The protein localises to the extracellular space. Its subcellular location is the extracellular matrix. Its function is as follows. May be important in developing and maintaining corneal transparency and for the structure of the stromal matrix. The sequence is that of Keratocan (Kera) from Mus musculus (Mouse).